Here is a 336-residue protein sequence, read N- to C-terminus: Pyridoxal 5'-phosphate synthase subunit PdxS (336 aa).

Asp-30 provides a ligand contact to D-ribose 5-phosphate. The active-site Schiff-base intermediate with D-ribose 5-phosphate is the Lys-87. Residue Gly-159 coordinates D-ribose 5-phosphate. A D-glyceraldehyde 3-phosphate-binding site is contributed by Arg-171. D-ribose 5-phosphate contacts are provided by residues Gly-257 and Gly-278–Ser-279.

Belongs to the PdxS/SNZ family. In the presence of PdxT, forms a dodecamer of heterodimers.

The catalysed reaction is aldehydo-D-ribose 5-phosphate + D-glyceraldehyde 3-phosphate + L-glutamine = pyridoxal 5'-phosphate + L-glutamate + phosphate + 3 H2O + H(+). It functions in the pathway cofactor biosynthesis; pyridoxal 5'-phosphate biosynthesis. In terms of biological role, catalyzes the formation of pyridoxal 5'-phosphate from ribose 5-phosphate (RBP), glyceraldehyde 3-phosphate (G3P) and ammonia. The ammonia is provided by the PdxT subunit. Can also use ribulose 5-phosphate and dihydroxyacetone phosphate as substrates, resulting from enzyme-catalyzed isomerization of RBP and G3P, respectively. This is Pyridoxal 5'-phosphate synthase subunit PdxS from Thermoplasma acidophilum (strain ATCC 25905 / DSM 1728 / JCM 9062 / NBRC 15155 / AMRC-C165).